The following is a 472-amino-acid chain: Ribosomal protein uS12 methylthiotransferase RimO (472 aa).

Positions 33 to 143 constitute an MTTase N-terminal domain; it reads NRIGFVSLGC…VLKHVHKYVP (111 aa). Residues cysteine 42, cysteine 78, cysteine 107, cysteine 175, cysteine 179, and cysteine 182 each contribute to the [4Fe-4S] cluster site. Residues 161–398 enclose the Radical SAM core domain; that stretch reads LTPKHYAYLK…MEVQAEISAE (238 aa). The TRAM domain maps to 401–467; the sequence is ARFVGRTLDI…EHDLWAEVVD (67 aa).

This sequence belongs to the methylthiotransferase family. RimO subfamily. Requires [4Fe-4S] cluster as cofactor.

Its subcellular location is the cytoplasm. The catalysed reaction is L-aspartate(89)-[ribosomal protein uS12]-hydrogen + (sulfur carrier)-SH + AH2 + 2 S-adenosyl-L-methionine = 3-methylsulfanyl-L-aspartate(89)-[ribosomal protein uS12]-hydrogen + (sulfur carrier)-H + 5'-deoxyadenosine + L-methionine + A + S-adenosyl-L-homocysteine + 2 H(+). Functionally, catalyzes the methylthiolation of an aspartic acid residue of ribosomal protein uS12. The sequence is that of Ribosomal protein uS12 methylthiotransferase RimO from Shewanella baltica (strain OS155 / ATCC BAA-1091).